Consider the following 385-residue polypeptide: Lipid-A-disaccharide synthase (385 aa).

Belongs to the LpxB family.

The enzyme catalyses a lipid X + a UDP-2-N,3-O-bis[(3R)-3-hydroxyacyl]-alpha-D-glucosamine = a lipid A disaccharide + UDP + H(+). Its pathway is bacterial outer membrane biogenesis; LPS lipid A biosynthesis. In terms of biological role, condensation of UDP-2,3-diacylglucosamine and 2,3-diacylglucosamine-1-phosphate to form lipid A disaccharide, a precursor of lipid A, a phosphorylated glycolipid that anchors the lipopolysaccharide to the outer membrane of the cell. This Pseudoalteromonas translucida (strain TAC 125) protein is Lipid-A-disaccharide synthase.